The sequence spans 179 residues: Large ribosomal subunit protein uL5 (179 aa).

Belongs to the universal ribosomal protein uL5 family. Part of the 50S ribosomal subunit; part of the 5S rRNA/L5/L18/L25 subcomplex. Contacts the 5S rRNA and the P site tRNA. Forms a bridge to the 30S subunit in the 70S ribosome.

This is one of the proteins that bind and probably mediate the attachment of the 5S RNA into the large ribosomal subunit, where it forms part of the central protuberance. In the 70S ribosome it contacts protein S13 of the 30S subunit (bridge B1b), connecting the 2 subunits; this bridge is implicated in subunit movement. Contacts the P site tRNA; the 5S rRNA and some of its associated proteins might help stabilize positioning of ribosome-bound tRNAs. This chain is Large ribosomal subunit protein uL5, found in Synechococcus sp. (strain CC9605).